Reading from the N-terminus, the 141-residue chain is Small ribosomal subunit protein bS16 (141 aa).

The interval 84–141 is disordered; the sequence is TRKARSNPEKSKPKAKAQERLEAARMAEEEAAAAAKAAAEAPAEEAPAAEAPAEEAQA. The segment covering 89–111 has biased composition (basic and acidic residues); sequence SNPEKSKPKAKAQERLEAARMAE. Over residues 115-141 the composition is skewed to low complexity; the sequence is AAAAKAAAEAPAEEAPAAEAPAEEAQA.

The protein belongs to the bacterial ribosomal protein bS16 family.

The chain is Small ribosomal subunit protein bS16 from Parvibaculum lavamentivorans (strain DS-1 / DSM 13023 / NCIMB 13966).